The sequence spans 320 residues: Beta-ketoacyl-[acyl-carrier-protein] synthase III (320 aa).

Active-site residues include C114 and H247. Residues 248–252 are ACP-binding; sequence QANRR. N277 is a catalytic residue.

Belongs to the thiolase-like superfamily. FabH family. Homodimer.

Its subcellular location is the cytoplasm. It catalyses the reaction malonyl-[ACP] + acetyl-CoA + H(+) = 3-oxobutanoyl-[ACP] + CO2 + CoA. It functions in the pathway lipid metabolism; fatty acid biosynthesis. Catalyzes the condensation reaction of fatty acid synthesis by the addition to an acyl acceptor of two carbons from malonyl-ACP. Catalyzes the first condensation reaction which initiates fatty acid synthesis and may therefore play a role in governing the total rate of fatty acid production. Possesses both acetoacetyl-ACP synthase and acetyl transacylase activities. Its substrate specificity determines the biosynthesis of branched-chain and/or straight-chain of fatty acids. In Neisseria gonorrhoeae (strain ATCC 700825 / FA 1090), this protein is Beta-ketoacyl-[acyl-carrier-protein] synthase III.